The following is a 392-amino-acid chain: Methylthioribose-1-phosphate isomerase (392 aa).

D267 (proton donor) is an active-site residue.

The protein belongs to the eIF-2B alpha/beta/delta subunits family. MtnA subfamily.

The protein resides in the cytoplasm. It is found in the nucleus. It carries out the reaction 5-(methylsulfanyl)-alpha-D-ribose 1-phosphate = 5-(methylsulfanyl)-D-ribulose 1-phosphate. The protein operates within amino-acid biosynthesis; L-methionine biosynthesis via salvage pathway; L-methionine from S-methyl-5-thio-alpha-D-ribose 1-phosphate: step 1/6. Its function is as follows. Catalyzes the interconversion of methylthioribose-1-phosphate (MTR-1-P) into methylthioribulose-1-phosphate (MTRu-1-P). This is Methylthioribose-1-phosphate isomerase from Blastomyces gilchristii (strain SLH14081) (Blastomyces dermatitidis).